We begin with the raw amino-acid sequence, 864 residues long: Leucine--tRNA ligase (864 aa).

The short motif at 42–52 is the 'HIGH' region element; that stretch reads PYPSGKLHMGH. Residues 624–628 carry the 'KMSKS' region motif; it reads KMSKS. Residue lysine 627 participates in ATP binding.

Belongs to the class-I aminoacyl-tRNA synthetase family.

Its subcellular location is the cytoplasm. The enzyme catalyses tRNA(Leu) + L-leucine + ATP = L-leucyl-tRNA(Leu) + AMP + diphosphate. The polypeptide is Leucine--tRNA ligase (Burkholderia pseudomallei (strain 1710b)).